The following is a 458-amino-acid chain: MSSGRIVQIIGAVIDVEFPRDVVPSVYNALKVQGAETTLEVQQQLGDGVVRTIAMGSTEGLKRGLDVVDTGAAISVPVGKATLGRIMDVLGNPIDEAGPIGEEERRGIHQPAPSFADQAGGNDLLETGIKVIDLVCPFAKGGKVGLFGGAGVGKTVNMMELIRNIAMEHSGYSVFAGVGERTREGNDFYHEMKDSNVLDKVALVYGQMNEPPGNRLRVALTGLTMAEKFRDEGNDVLLFVDNIYRYTLAGTEVSALLGRMPSAVGYQPTLAEEMGVLQERITSTKEGSITSVQAVYVPADDLTDPSPATTFAHLDATVVLSRDIASLGIYPAVDPLDSTSRQLDPNVIGNEHYDTARGVQYVLQRYKELKDIIAILGMDELSEDDKQLVARARKIQRFLSQPFFVAEVFTGSPGKYVSLKDTIAGFSGILKGDYDHLPEQAFYMVGSIDEAIEKAKKL.

An ATP-binding site is contributed by 148–155 (GGAGVGKT).

This sequence belongs to the ATPase alpha/beta chains family. In terms of assembly, F-type ATPases have 2 components, CF(1) - the catalytic core - and CF(0) - the membrane proton channel. CF(1) has five subunits: alpha(3), beta(3), gamma(1), delta(1), epsilon(1). CF(0) has three main subunits: a(1), b(2) and c(9-12). The alpha and beta chains form an alternating ring which encloses part of the gamma chain. CF(1) is attached to CF(0) by a central stalk formed by the gamma and epsilon chains, while a peripheral stalk is formed by the delta and b chains.

The protein resides in the cell inner membrane. The enzyme catalyses ATP + H2O + 4 H(+)(in) = ADP + phosphate + 5 H(+)(out). Its function is as follows. Produces ATP from ADP in the presence of a proton gradient across the membrane. The catalytic sites are hosted primarily by the beta subunits. This chain is ATP synthase subunit beta, found in Pseudomonas putida (strain GB-1).